The chain runs to 416 residues: Isobutyryl-CoA dehydrogenase, mitochondrial (416 aa).

The N-terminal 23 residues, 1–23 (MMLRGGCQRVGARLRGLRRGPRG), are a transit peptide targeting the mitochondrion. K51 is modified (N6-acetyllysine; alternate). Position 51 is an N6-succinyllysine; alternate (K51). FAD is bound by residues 159-168 (YCLTEPGSGS) and 192-194 (FIS). Residue S168 participates in substrate binding. N6-acetyllysine is present on K232. K272 bears the N6-succinyllysine mark. 275–278 (NGGR) contributes to the substrate binding site. FAD-binding positions include R303, 313-314 (SQ), and 372-376 (QMHGG). Catalysis depends on E399, which acts as the Proton acceptor. 401-403 (SNE) lines the FAD pocket. R411 serves as a coordination point for substrate.

It belongs to the acyl-CoA dehydrogenase family. As to quaternary structure, homotetramer, formed by a dimer of dimers. The cofactor is FAD.

The protein localises to the mitochondrion. The catalysed reaction is 2-methylpropanoyl-CoA + oxidized [electron-transfer flavoprotein] + H(+) = 2-methylpropenoyl-CoA + reduced [electron-transfer flavoprotein]. It carries out the reaction (2S)-2-methylbutanoyl-CoA + oxidized [electron-transfer flavoprotein] + H(+) = (2E)-2-methylbut-2-enoyl-CoA + reduced [electron-transfer flavoprotein]. It catalyses the reaction propanoyl-CoA + oxidized [electron-transfer flavoprotein] + H(+) = acryloyl-CoA + reduced [electron-transfer flavoprotein]. It functions in the pathway amino-acid degradation; L-valine degradation. Its function is as follows. Isobutyryl-CoA dehydrogenase which catalyzes the conversion of 2-methylpropanoyl-CoA to (2E)-2-methylpropenoyl-CoA in the valine catabolic pathway. To a lesser extent, also able to catalyze the oxidation of (2S)-2-methylbutanoyl-CoA. This Bos taurus (Bovine) protein is Isobutyryl-CoA dehydrogenase, mitochondrial (ACAD8).